Here is a 297-residue protein sequence, read N- to C-terminus: 4-hydroxy-tetrahydrodipicolinate synthase (297 aa).

T46 is a binding site for pyruvate. Y136 functions as the Proton donor/acceptor in the catalytic mechanism. Catalysis depends on K165, which acts as the Schiff-base intermediate with substrate. T206 lines the pyruvate pocket.

This sequence belongs to the DapA family. As to quaternary structure, homotetramer; dimer of dimers.

The protein resides in the cytoplasm. The catalysed reaction is L-aspartate 4-semialdehyde + pyruvate = (2S,4S)-4-hydroxy-2,3,4,5-tetrahydrodipicolinate + H2O + H(+). The protein operates within amino-acid biosynthesis; L-lysine biosynthesis via DAP pathway; (S)-tetrahydrodipicolinate from L-aspartate: step 3/4. Catalyzes the condensation of (S)-aspartate-beta-semialdehyde [(S)-ASA] and pyruvate to 4-hydroxy-tetrahydrodipicolinate (HTPA). This is 4-hydroxy-tetrahydrodipicolinate synthase from Sulfurimonas denitrificans (strain ATCC 33889 / DSM 1251) (Thiomicrospira denitrificans (strain ATCC 33889 / DSM 1251)).